The sequence spans 197 residues: Imidazoleglycerol-phosphate dehydratase (197 aa).

It belongs to the imidazoleglycerol-phosphate dehydratase family.

The protein localises to the cytoplasm. It carries out the reaction D-erythro-1-(imidazol-4-yl)glycerol 3-phosphate = 3-(imidazol-4-yl)-2-oxopropyl phosphate + H2O. It participates in amino-acid biosynthesis; L-histidine biosynthesis; L-histidine from 5-phospho-alpha-D-ribose 1-diphosphate: step 6/9. The chain is Imidazoleglycerol-phosphate dehydratase from Nitrosococcus oceani (strain ATCC 19707 / BCRC 17464 / JCM 30415 / NCIMB 11848 / C-107).